The primary structure comprises 479 residues: Monodictyphenone cluster transcriptional coactivator mdpA (479 aa).

One can recognise an HTH iclR-type domain in the interval 77–147 (LAVQNQLLAC…DPGQVAHSAL (71 aa)). A DNA-binding region (H-T-H motif) is located at residues 107–126 (IKDVAELAGVPETHLSRIIR). 2 disordered regions span residues 281 to 305 (GPTA…HKHD) and 314 to 333 (TAST…TTNS). Over residues 289–298 (HPNPIRPPTP) the composition is skewed to pro residues. Low complexity predominate over residues 314–323 (TASTTPASSH).

Its subcellular location is the nucleus. Transcriptional coactivator; part of the gene cluster that mediates the biosynthesis of monodictyphenone, a prenyl xanthone derivative. With mdpE, coregulates the production of monodictyphenone. This is Monodictyphenone cluster transcriptional coactivator mdpA from Emericella nidulans (strain FGSC A4 / ATCC 38163 / CBS 112.46 / NRRL 194 / M139) (Aspergillus nidulans).